Consider the following 335-residue polypeptide: Mitochondrial fission regulator 1 (335 aa).

The N-terminal 48 residues, 1–48 (MIRWFKCFMRMIFEQVGLNMESVLWSSKPYGSSRSIVRKIGTNLSLIQ), are a transit peptide targeting the mitochondrion. The stretch at 134-170 (RSTVIANEEAMQKISALENELATLRAQIAKIVILQEQ) forms a coiled coil. The interval 182–309 (ASAAVPCVPP…DKVIPKSETN (128 aa)) is necessary and sufficient to promote mitochondrial fission. Residues 219-240 (RKNRKTNSGPIPTENGPKKPEI) form a disordered region.

The protein belongs to the MTFR1 family. Widely expressed in embryonic tissues with higher expression in cartilage and hypertrophic chondrocytes. Specifically expressed in hypertrophic chondrocytes (at protein level).

Its subcellular location is the mitochondrion. Functionally, may play a role in mitochondrial aerobic respiration. May also regulate mitochondrial organization and fission. This is Mitochondrial fission regulator 1 (MTFR1) from Gallus gallus (Chicken).